A 137-amino-acid polypeptide reads, in one-letter code: Bacteriohemerythrin (137 aa).

His21, His53, Glu57, His72, His76, His112, and Asp117 together coordinate Fe cation.

The protein belongs to the hemerythrin family. As to quaternary structure, monomer.

Its function is as follows. Oxygen-binding protein. May be involved in a storage mechanism or for delivery to oxygen-requiring enzymes. The oxygen-binding site contains two iron atoms. This Ralstonia nicotianae (strain ATCC BAA-1114 / GMI1000) (Ralstonia solanacearum) protein is Bacteriohemerythrin.